The sequence spans 305 residues: UDP-3-O-acyl-N-acetylglucosamine deacetylase (305 aa).

The Zn(2+) site is built by histidine 79, histidine 238, and aspartate 242. Histidine 265 functions as the Proton donor in the catalytic mechanism.

It belongs to the LpxC family. Requires Zn(2+) as cofactor.

It carries out the reaction a UDP-3-O-[(3R)-3-hydroxyacyl]-N-acetyl-alpha-D-glucosamine + H2O = a UDP-3-O-[(3R)-3-hydroxyacyl]-alpha-D-glucosamine + acetate. Its pathway is glycolipid biosynthesis; lipid IV(A) biosynthesis; lipid IV(A) from (3R)-3-hydroxytetradecanoyl-[acyl-carrier-protein] and UDP-N-acetyl-alpha-D-glucosamine: step 2/6. In terms of biological role, catalyzes the hydrolysis of UDP-3-O-myristoyl-N-acetylglucosamine to form UDP-3-O-myristoylglucosamine and acetate, the committed step in lipid A biosynthesis. The polypeptide is UDP-3-O-acyl-N-acetylglucosamine deacetylase (Vibrio cholerae serotype O1 (strain ATCC 39541 / Classical Ogawa 395 / O395)).